A 474-amino-acid chain; its full sequence is MAGRLRGPAVPGGGESSDSDEDGWDIGYTERPDKLKDSLLSEEKDEVLKRALTTGDGSLLEELLNSGMQVDSSFRFGWTPLMYAASIANVDLVRILLDRGANASFSKDQHTVLMAACSARVPEERILKTAELLLSRNASPNATCRKRMSPLMYAAREGHSQLVALLVGHGAEINAQDDNGYTALAWAARHGHKTTVLKLLELGADKTLQTQDGKTPAEIAKRNKHPELFSMLSLTLNPLHGKFQNITKEENICKFLITDSEKSRDHGFSSYSAFGDLEIFLHGLQLEHLTELLKERDITLRQLLTLRKDDFTKIGITNVRDQKKIMDAVEELQVEEIKFEELPEVMKLEFSGDEFLNFLLKLSKQCGHLTTAVQDIISQFPVHSHKIVLEWGSPECFTSVCEDLVHNAQNLGEEVGKLKHLIQKLHNDQKNDSCRIPPMENVSTGKKRLWKRAAVTVCGFGLLFIVCKLTFLRK.

A disordered region spans residues 1–31 (MAGRLRGPAVPGGGESSDSDEDGWDIGYTER). Phosphoserine occurs at positions 16, 17, and 19. ANK repeat units lie at residues 43–72 (EKDEVLKRALTTGDGSLLEELLNSGMQVDS), 76–105 (FGWTPLMYAASIANVDLVRILLDRGANASF), 108–142 (DQHTVLMAACSARVPEERILKTAELLLSRNASPNA), 146–175 (KRMSPLMYAAREGHSQLVALLVGHGAEINA), 179–208 (NGYTALAWAARHGHKTTVLKLLELGADKTL), and 212–241 (DGKTPAEIAKRNKHPELFSMLSLTLNPLHG). The region spanning 270–333 (SYSAFGDLEI…KIMDAVEELQ (64 aa)) is the SAM domain.

Interacts with DDX4, PIWIL1, RANBP9 and TDRD1.

Its subcellular location is the cytoplasm. Plays a central role during spermatogenesis by repressing transposable elements and preventing their mobilization, which is essential for the germline integrity. Acts via the piRNA metabolic process, which mediates the repression of transposable elements during meiosis by forming complexes composed of piRNAs and Piwi proteins and governs the methylation and subsequent repression of transposons. Its association with pi-bodies suggests a participation in the primary piRNAs metabolic process. Required prior to the pachytene stage to facilitate the production of multiple types of piRNAs, including those associated with repeats involved in the regulation of retrotransposons. May act by mediating protein-protein interactions during germ cell maturation. This chain is Ankyrin repeat, SAM and basic leucine zipper domain-containing protein 1 (ASZ1), found in Ornithorhynchus anatinus (Duckbill platypus).